Here is a 72-residue protein sequence, read N- to C-terminus: MSLGVLAAAIAVGLGALGAGIGNGLIVSRTIEGIAAQPELRPVLQTTMFIGVALVEALPIIGVVFSFIYLGR.

A run of 2 helical transmembrane segments spans residues 1 to 21 and 48 to 68; these read MSLG…GAGI and MFIG…FSFI.

It belongs to the ATPase C chain family. As to quaternary structure, F-type ATPases have 2 components, F(1) - the catalytic core - and F(0) - the membrane proton channel. F(1) has five subunits: alpha(3), beta(3), gamma(1), delta(1), epsilon(1). F(0) has three main subunits: a(1), b(2) and c(10-14). The alpha and beta chains form an alternating ring which encloses part of the gamma chain. F(1) is attached to F(0) by a central stalk formed by the gamma and epsilon chains, while a peripheral stalk is formed by the delta and b chains.

It is found in the cell membrane. In terms of biological role, f(1)F(0) ATP synthase produces ATP from ADP in the presence of a proton or sodium gradient. F-type ATPases consist of two structural domains, F(1) containing the extramembraneous catalytic core and F(0) containing the membrane proton channel, linked together by a central stalk and a peripheral stalk. During catalysis, ATP synthesis in the catalytic domain of F(1) is coupled via a rotary mechanism of the central stalk subunits to proton translocation. Key component of the F(0) channel; it plays a direct role in translocation across the membrane. A homomeric c-ring of between 10-14 subunits forms the central stalk rotor element with the F(1) delta and epsilon subunits. In Bacillus caldotenax, this protein is ATP synthase subunit c.